The following is an 87-amino-acid chain: Sec-independent protein translocase protein TatA (87 aa).

The chain crosses the membrane as a helical span at residues 3–23 (GTFSWTHLLIIALLFVVLFGA). Residues 47–87 (MQHETPQANAAPVQQPAQQLPPAQPAQAPAQPVNQAEQKSA) are disordered. A compositionally biased stretch (low complexity) spans 52–87 (PQANAAPVQQPAQQLPPAQPAQAPAQPVNQAEQKSA).

The protein belongs to the TatA/E family. In terms of assembly, the Tat system comprises two distinct complexes: a TatABC complex, containing multiple copies of TatA, TatB and TatC subunits, and a separate TatA complex, containing only TatA subunits. Substrates initially bind to the TatABC complex, which probably triggers association of the separate TatA complex to form the active translocon.

It localises to the cell membrane. Its function is as follows. Part of the twin-arginine translocation (Tat) system that transports large folded proteins containing a characteristic twin-arginine motif in their signal peptide across membranes. TatA could form the protein-conducting channel of the Tat system. This chain is Sec-independent protein translocase protein TatA, found in Nocardia farcinica (strain IFM 10152).